The primary structure comprises 449 residues: MEHKRGHVLAVPYPTQGHITPFRQFCKRLHFKGLKTTLALTTFVFNSINPDLSGPISIATISDGYDHGGFETADSIDDYLKDFKTSGSKTIADIIQKHQTSDNPITCIVYDAFLPWALDVAREFGLVATPFFTQPCAVNYVYYLSYINNGSLQLPIEELPFLELQDLPSFFSVSGSYPAYFEMVLQQFINFEKADFVLVNSFQELELHENELWSKACPVLTIGPTIPSIYLDQRIKSDTGYDLNLFESKDDSFCINWLDTRPQGSVVYVAFGSMAQLTNVQMEELASAVSNFSFLWVVRSSEEEKLPSGFLETVNKEKSLVLKWSPQLQVLSNKAIGCFLTHCGWNSTMEALTFGVPMVAMPQWTDQPMNAKYIQDVWKAGVRVKTEKESGIAKREEIEFSIKEVMEGERSKEMKKNVKKWRDLAVKSLNEGGSTDTNIDTFVSRVQSK.

UDP-alpha-D-glucose contacts are provided by residues S273, 325–327, 342–350, and 364–367; these read SPQ, HCGWNSTME, and WTDQ.

This sequence belongs to the UDP-glycosyltransferase family. As to expression, expressed in seedlings.

Functionally, glycosyltransferase that glucosylates benzoic acid and derivatives. Substrate preference is benzoic acid &gt; salicylic acid (SA) &gt; 3-hydroxybenzoic acid &gt; 4-hydroxybenzoic acid. Catalyzes the formation of both SA 2-O-beta-D-glucoside (SAG) and SA glucose ester (SGE). Has high affinity for the tryptophan precursor anthranilate. Catalyzes the formation of anthranilate glucose ester. Is the major source of this activity in the plant. The sequence is that of UDP-glycosyltransferase 74F2 (UGT74F2) from Arabidopsis thaliana (Mouse-ear cress).